The following is an 818-amino-acid chain: Piwi-like protein (818 aa).

The region spanning 220 to 339 (RINRVLNDNS…ITGELCFLCG (120 aa)) is the PAZ domain. Residues 501-800 (KIALVFVPDD…LAELIGKVHK (300 aa)) enclose the Piwi domain.

Belongs to the argonaute family. Piwi subfamily.

This chain is Piwi-like protein (iwi), found in Dugesia japonica (Planarian).